Reading from the N-terminus, the 312-residue chain is Pimeloyl-[acyl-carrier protein] methyl ester esterase (312 aa).

The AB hydrolase-1 domain occupies 17–241 (VYLIHGWGAN…KAAHAPFLSH (225 aa)). Substrate contacts are provided by residues Trp23, 83–84 (SL), and 145–149 (FLQLQ). Ser83 functions as the Nucleophile in the catalytic mechanism. Active-site residues include Asp207 and His235. Residue His235 coordinates substrate.

Belongs to the AB hydrolase superfamily. Carboxylesterase BioH family. As to quaternary structure, monomer.

The protein localises to the cytoplasm. The enzyme catalyses 6-carboxyhexanoyl-[ACP] methyl ester + H2O = 6-carboxyhexanoyl-[ACP] + methanol + H(+). The protein operates within cofactor biosynthesis; biotin biosynthesis. Its function is as follows. The physiological role of BioH is to remove the methyl group introduced by BioC when the pimeloyl moiety is complete. It allows to synthesize pimeloyl-ACP via the fatty acid synthetic pathway through the hydrolysis of the ester bonds of pimeloyl-ACP esters. In Neisseria meningitidis serogroup A / serotype 4A (strain DSM 15465 / Z2491), this protein is Pimeloyl-[acyl-carrier protein] methyl ester esterase.